A 403-amino-acid polypeptide reads, in one-letter code: Argininosuccinate synthase (403 aa).

10-18 (AYSGGLDTS) lines the ATP pocket. Residues Tyr88 and Ser93 each contribute to the L-citrulline site. Gly118 contributes to the ATP binding site. Thr120, Asn124, and Asp125 together coordinate L-aspartate. Asn124 contacts L-citrulline. Positions 128, 177, 186, 263, and 275 each coordinate L-citrulline.

This sequence belongs to the argininosuccinate synthase family. Type 1 subfamily. As to quaternary structure, homotetramer.

It localises to the cytoplasm. The enzyme catalyses L-citrulline + L-aspartate + ATP = 2-(N(omega)-L-arginino)succinate + AMP + diphosphate + H(+). It functions in the pathway amino-acid biosynthesis; L-arginine biosynthesis; L-arginine from L-ornithine and carbamoyl phosphate: step 2/3. In Clostridium perfringens (strain ATCC 13124 / DSM 756 / JCM 1290 / NCIMB 6125 / NCTC 8237 / Type A), this protein is Argininosuccinate synthase.